The following is a 1687-amino-acid chain: Brefeldin A-inhibited guanine nucleotide-exchange protein 1 (1687 aa).

The disordered stretch occupies residues Ser494–Asp529. The segment covering Thr514 to Leu523 has biased composition (basic and acidic residues). Residues Thr532–Asn719 form the SEC7 domain. Glu634 is an active-site residue. The interval Lys1229–Gln1248 is disordered. A compositionally biased stretch (polar residues) spans Ser1232–Gln1248.

In terms of assembly, homodimer.

Its subcellular location is the cytoplasm. It localises to the cytosol. The protein localises to the membrane. Its activity is regulated as follows. Inhibited by brefeldin A. Its function is as follows. Activates the ARF proteins by exchanging bound GDP for free GTP. Plays a role in vesicular protein sorting. The chain is Brefeldin A-inhibited guanine nucleotide-exchange protein 1 (BIG1) from Arabidopsis thaliana (Mouse-ear cress).